A 116-amino-acid polypeptide reads, in one-letter code: Protein Wnt-5b (116 aa).

The O-palmitoleoyl serine; by PORCN moiety is linked to residue Ser-1. N-linked (GlcNAc...) asparagine glycans are attached at residues Asn-69 and Asn-83. Cys-82 and Cys-97 are joined by a disulfide.

It belongs to the Wnt family. Palmitoleoylation is required for efficient binding to frizzled receptors. Depalmitoleoylation leads to Wnt signaling pathway inhibition.

It localises to the secreted. The protein resides in the extracellular space. It is found in the extracellular matrix. Ligand for members of the frizzled family of seven transmembrane receptors. Probable developmental protein. May be a signaling molecule which affects the development of discrete regions of tissues. Is likely to signal over only few cell diameters. This Plethodon jordani (Red-cheeked salamander) protein is Protein Wnt-5b (WNT-5B).